The chain runs to 424 residues: Arginine biosynthesis bifunctional protein ArgJ (424 aa).

Substrate is bound by residues Thr166, Lys192, Thr203, Glu290, Asn419, and Thr424. Thr203 serves as the catalytic Nucleophile.

It belongs to the ArgJ family. Heterotetramer of two alpha and two beta chains.

The protein resides in the cytoplasm. It catalyses the reaction N(2)-acetyl-L-ornithine + L-glutamate = N-acetyl-L-glutamate + L-ornithine. The enzyme catalyses L-glutamate + acetyl-CoA = N-acetyl-L-glutamate + CoA + H(+). It participates in amino-acid biosynthesis; L-arginine biosynthesis; L-ornithine and N-acetyl-L-glutamate from L-glutamate and N(2)-acetyl-L-ornithine (cyclic): step 1/1. It functions in the pathway amino-acid biosynthesis; L-arginine biosynthesis; N(2)-acetyl-L-ornithine from L-glutamate: step 1/4. In terms of biological role, catalyzes two activities which are involved in the cyclic version of arginine biosynthesis: the synthesis of N-acetylglutamate from glutamate and acetyl-CoA as the acetyl donor, and of ornithine by transacetylation between N(2)-acetylornithine and glutamate. The polypeptide is Arginine biosynthesis bifunctional protein ArgJ (Colwellia psychrerythraea (strain 34H / ATCC BAA-681) (Vibrio psychroerythus)).